The following is a 587-amino-acid chain: uncharacterized protein (587 aa).

Residues methionine 1–alanine 21 form the signal peptide. Residues leucine 22–arginine 541 lie on the Lumenal side of the membrane. Residue asparagine 25 is glycosylated (N-linked (GlcNAc...) asparagine). The interval glycine 44–phenylalanine 108 is disordered. A compositionally biased stretch (basic and acidic residues) spans arginine 63–aspartate 90. The segment covering alanine 91–phenylalanine 108 has biased composition (polar residues). One can recognise an SUN domain in the interval asparagine 163–methionine 331. Asparagine 378, asparagine 381, asparagine 408, asparagine 448, and asparagine 486 each carry an N-linked (GlcNAc...) asparagine glycan. A helical transmembrane segment spans residues isoleucine 542–glutamate 562. Residues leucine 563 to arginine 587 lie on the Cytoplasmic side of the membrane.

The protein belongs to the SLP1 family. As to quaternary structure, interacts with EMP65.

The protein localises to the endoplasmic reticulum membrane. Functionally, may be involved in membrane protein folding. Required for localization of MPS3 to the nuclear envelope. This is an uncharacterized protein from Saccharomyces cerevisiae (strain ATCC 204508 / S288c) (Baker's yeast).